A 64-amino-acid chain; its full sequence is MKQKTHKGTAKRIKVTGSGKLRREQANRRHLLEGKPSKRTRRLKGTEDVAKADTKRVKRLLGRA.

The segment covering 1-14 (MKQKTHKGTAKRIK) has biased composition (basic residues). The interval 1–48 (MKQKTHKGTAKRIKVTGSGKLRREQANRRHLLEGKPSKRTRRLKGTED) is disordered. Basic and acidic residues predominate over residues 21-36 (LRREQANRRHLLEGKP).

Belongs to the bacterial ribosomal protein bL35 family.

The polypeptide is Large ribosomal subunit protein bL35 (Corynebacterium aurimucosum (strain ATCC 700975 / DSM 44827 / CIP 107346 / CN-1) (Corynebacterium nigricans)).